The sequence spans 485 residues: Inosine-5'-monophosphate dehydrogenase (485 aa).

CBS domains follow at residues 99–154 (IVED…TVKE) and 156–212 (MTRE…KNAV). NAD(+) contacts are provided by residues Asp247 and 294-296 (GIG). Positions 296 and 298 each coordinate K(+). Ser299 contributes to the IMP binding site. K(+) is bound at residue Cys301. The active-site Thioimidate intermediate is the Cys301. Residues 334 to 336 (DGG), 357 to 358 (GN), and 381 to 385 (YRGMG) contribute to the IMP site. Arg397 functions as the Proton acceptor in the catalytic mechanism. Glu412 contacts IMP. Positions 466, 467, and 468 each coordinate K(+).

It belongs to the IMPDH/GMPR family. As to quaternary structure, homotetramer. K(+) serves as cofactor.

The catalysed reaction is IMP + NAD(+) + H2O = XMP + NADH + H(+). It functions in the pathway purine metabolism; XMP biosynthesis via de novo pathway; XMP from IMP: step 1/1. With respect to regulation, mycophenolic acid (MPA) is a non-competitive inhibitor that prevents formation of the closed enzyme conformation by binding to the same site as the amobile flap. In contrast, mizoribine monophosphate (MZP) is a competitive inhibitor that induces the closed conformation. MPA is a potent inhibitor of mammalian IMPDHs but a poor inhibitor of the bacterial enzymes. MZP is a more potent inhibitor of bacterial IMPDH. Catalyzes the conversion of inosine 5'-phosphate (IMP) to xanthosine 5'-phosphate (XMP), the first committed and rate-limiting step in the de novo synthesis of guanine nucleotides, and therefore plays an important role in the regulation of cell growth. The polypeptide is Inosine-5'-monophosphate dehydrogenase (Pyrococcus furiosus (strain ATCC 43587 / DSM 3638 / JCM 8422 / Vc1)).